The chain runs to 228 residues: Woronin body membrane protein wscA (228 aa).

Transmembrane regions (helical) follow at residues 89–109, 130–150, 162–182, and 185–205; these read MTLY…GILQ, LIVS…IAGA, AGFM…LAFA, and FLPE…IGTY.

The protein belongs to the peroxisomal membrane protein PXMP2/4 family. Self-assembles into detergent-resistant oligomers and forms a complex with hexA assemblies.

It localises to the peroxisome membrane. The protein localises to the cell septum. In terms of biological role, woronin sorting complex protein involved in both Woronin bodies (WB) formation and inherence. Localizes to large peroxisome membranes where it self-assembles into detergent-resistant oligomers that envelop hex-1 assemblies, producing asymmetrical nascent WBs. These structures are then delivered to the cell cortex, which permits partitioning of the nascent WB and WB inheritance. The protein is Woronin body membrane protein wscA of Aspergillus fumigatus (strain ATCC MYA-4609 / CBS 101355 / FGSC A1100 / Af293) (Neosartorya fumigata).